The sequence spans 98 residues: NADH-ubiquinone oxidoreductase chain 4L (98 aa).

A run of 3 helical transmembrane segments spans residues 2-22, 29-49, and 61-81; these read SLVY…LLMF, SLLC…ILIL, and IIML…LVMV.

This sequence belongs to the complex I subunit 4L family. As to quaternary structure, core subunit of respiratory chain NADH dehydrogenase (Complex I) which is composed of 45 different subunits.

The protein resides in the mitochondrion inner membrane. The catalysed reaction is a ubiquinone + NADH + 5 H(+)(in) = a ubiquinol + NAD(+) + 4 H(+)(out). In terms of biological role, core subunit of the mitochondrial membrane respiratory chain NADH dehydrogenase (Complex I) which catalyzes electron transfer from NADH through the respiratory chain, using ubiquinone as an electron acceptor. Part of the enzyme membrane arm which is embedded in the lipid bilayer and involved in proton translocation. This chain is NADH-ubiquinone oxidoreductase chain 4L (MT-ND4L), found in Galemys pyrenaicus (Iberian desman).